We begin with the raw amino-acid sequence, 576 residues long: Non-neuronal cytoplasmic intermediate filament protein (576 aa).

The segment at 1-51 (MTSKISTTYEEEGRQSKIQPRAFVITRSGPSSKSSSFSARQSYASSRQSIT) is disordered. Residues 2-75 (TSKISTTYEE…FRGTREKEKR (74 aa)) are head. Low complexity predominate over residues 28–49 (SGPSSKSSSFSARQSYASSRQS). The IF rod domain occupies 73 to 425 (EKREMQNLNE…KLLEGEESRV (353 aa)). The interval 76–108 (EMQNLNERLASYIEKVHFLDAQVKKLEAENEAL) is coil 1A. The segment at 109-122 (RNRKSESLQPIRDA) is linker 1. Residues 123-260 (YENELAQARK…DLLDQLELLK (138 aa)) form a coil 1B region. The linker 2 stretch occupies residues 261-278 (PEPIQIKGMDYAEFWKSE). The tract at residues 279-425 (LSKCVREIQS…KLLEGEESRV (147 aa)) is coil 2. Positions 426 to 576 (GLRSLVEQAI…KATLIAKFSG (151 aa)) are tail. One can recognise an LTD domain in the interval 456-574 (GSMTIQRSSK…NEKATLIAKF (119 aa)).

Belongs to the intermediate filament family. In terms of assembly, can form homopolymers.

The protein resides in the cytoplasm. The polypeptide is Non-neuronal cytoplasmic intermediate filament protein (Cornu aspersum (Brown garden snail)).